The chain runs to 149 residues: Altered inheritance of mitochondria protein 11 (149 aa).

2 helical membrane-spanning segments follow: residues 29 to 48 (MMRF…LAIT) and 79 to 101 (LVLA…CWIW).

It belongs to the AIM11 family.

Its subcellular location is the membrane. In Vanderwaltozyma polyspora (strain ATCC 22028 / DSM 70294 / BCRC 21397 / CBS 2163 / NBRC 10782 / NRRL Y-8283 / UCD 57-17) (Kluyveromyces polysporus), this protein is Altered inheritance of mitochondria protein 11 (AIM11).